Consider the following 50-residue polypeptide: MDLGSGSSQGGDLETTFQLWLQLLLWAHLAVRFLGYLHRTFRGPKPQPAP.

A helical membrane pass occupies residues 15 to 37; that stretch reads TTFQLWLQLLLWAHLAVRFLGYL.

It is found in the membrane. In Homo sapiens (Human), this protein is Small integral membrane protein 46.